The following is a 389-amino-acid chain: Epidermis-specific secreted glycoprotein EP1 (389 aa).

Residues 1–24 (MARFFPLTLTILLFFIQRIDFCHT) form the signal peptide. Asn-29 is a glycosylation site (N-linked (GlcNAc...) (complex) asparagine). A Bulb-type lectin domain is found at 88–193 (MRWVWEANRG…ASPGENVNGP (106 aa)). N-linked (GlcNAc...) asparagine glycosylation is found at Asn-103, Asn-230, and Asn-235. A glycan (N-linked (GlcNAc...) (high mannose) asparagine) is linked at Asn-274.

As to expression, in 14-day old seedlings, expressed in the epidermis and apical dome of the shoot and in the hypocotyl, cotyledon and epidermis of the root. In developing seeds, expressed in both the inner and outer epidermis of the integument.

The protein localises to the secreted. May be involved in the limitation of water flow through the outer epidermal cell wall, either by direct modification of wall structure or as a signal instructing the protoplast to restrict water transport across the cell wall. The polypeptide is Epidermis-specific secreted glycoprotein EP1 (EP1) (Daucus carota (Wild carrot)).